Here is an 88-residue protein sequence, read N- to C-terminus: Phosphocarrier protein HPr (88 aa).

In terms of domain architecture, HPr spans 2–88; that stretch reads AQKTFKVTAD…ETMKSEGLGE (87 aa). Ser-12 bears the Phosphoserine mark. Residue His-15 is the Pros-phosphohistidine intermediate; alternate of the active site. His-15 bears the Tele-phosphohistidine; alternate mark. A Phosphoserine; by HPrK/P modification is found at Ser-46.

This sequence belongs to the HPr family. Phosphorylated during sporulation.

It is found in the cytoplasm. Its activity is regulated as follows. Phosphorylation on Ser-46 inhibits the phosphoryl transfer from enzyme I to HPr. In terms of biological role, general (non sugar-specific) component of the phosphoenolpyruvate-dependent sugar phosphotransferase system (sugar PTS). This major carbohydrate active-transport system catalyzes the phosphorylation of incoming sugar substrates concomitantly with their translocation across the cell membrane. The phosphoryl group from phosphoenolpyruvate (PEP) is transferred to the phosphoryl carrier protein HPr by enzyme I. Phospho-HPr then transfers it to the PTS EIIA domain. Its function is as follows. P-Ser-HPr interacts with the catabolite control protein A (CcpA), forming a complex that binds to DNA at the catabolite response elements cre, operator sites preceding a large number of catabolite-regulated genes. Thus, P-Ser-HPr is a corepressor in carbon catabolite repression (CCR), a mechanism that allows bacteria to coordinate and optimize the utilization of available carbon sources. P-Ser-HPr also plays a role in inducer exclusion, in which it probably interacts with several non-PTS permeases and inhibits their transport activity. This chain is Phosphocarrier protein HPr (ptsH), found in Bacillus subtilis (strain 168).